Here is a 531-residue protein sequence, read N- to C-terminus: Bifunctional protein TrpGD (531 aa).

The 194-residue stretch at Asp3–Pro196 folds into the Glutamine amidotransferase type-1 domain. Position 57–59 (Gly57–Gly59) interacts with L-glutamine. The active-site Nucleophile; for GATase activity is Cys84. L-glutamine contacts are provided by residues Gln88 and Ser134–Leu135. Active-site for GATase activity residues include His170 and Glu172. The tract at residues Pro202–Gly531 is anthranilate phosphoribosyltransferase.

The protein in the C-terminal section; belongs to the anthranilate phosphoribosyltransferase family. In terms of assembly, monomer. Heterotetramer consisting of two non-identical subunits: a beta subunit (TrpG) and a large alpha subunit (TrpE).

The enzyme catalyses chorismate + L-glutamine = anthranilate + pyruvate + L-glutamate + H(+). It catalyses the reaction N-(5-phospho-beta-D-ribosyl)anthranilate + diphosphate = 5-phospho-alpha-D-ribose 1-diphosphate + anthranilate. Its pathway is amino-acid biosynthesis; L-tryptophan biosynthesis; L-tryptophan from chorismate: step 1/5. It functions in the pathway amino-acid biosynthesis; L-tryptophan biosynthesis; L-tryptophan from chorismate: step 2/5. With respect to regulation, cooperatively feedback inhibited by tryptophan. Part of a heterotetrameric complex that catalyzes the two-step biosynthesis of anthranilate, an intermediate in the biosynthesis of L-tryptophan. In the first step, the glutamine-binding beta subunit (TrpG) of anthranilate synthase (AS) provides the glutamine amidotransferase activity which generates ammonia as a substrate that, along with chorismate, is used in the second step, catalyzed by the large alpha subunit of AS (TrpE) to produce anthranilate. In the absence of TrpG, TrpE can synthesize anthranilate directly from chorismate and high concentrations of ammonia. In addition to synthesizing anthranilate, it also catalyzes the second step of the pathway, the transfer of the phosphoribosyl group of 5-phosphorylribose-1-pyrophosphate (PRPP) to anthranilate. This is Bifunctional protein TrpGD (trpGD) from Salmonella typhimurium (strain LT2 / SGSC1412 / ATCC 700720).